Here is a 145-residue protein sequence, read N- to C-terminus: 3-hydroxyacyl-[acyl-carrier-protein] dehydratase FabZ (145 aa).

His-48 is an active-site residue.

Belongs to the thioester dehydratase family. FabZ subfamily.

The protein localises to the cytoplasm. The enzyme catalyses a (3R)-hydroxyacyl-[ACP] = a (2E)-enoyl-[ACP] + H2O. In terms of biological role, involved in unsaturated fatty acids biosynthesis. Catalyzes the dehydration of short chain beta-hydroxyacyl-ACPs and long chain saturated and unsaturated beta-hydroxyacyl-ACPs. This Geobacillus sp. (strain WCH70) protein is 3-hydroxyacyl-[acyl-carrier-protein] dehydratase FabZ.